Here is a 447-residue protein sequence, read N- to C-terminus: Tubulin beta-1 chain (447 aa).

A GTP-binding site is contributed by glutamine 11. Position 40 is a phosphoserine (serine 40). GTP-binding residues include glutamate 69, serine 138, glycine 142, threonine 143, glycine 144, asparagine 204, and asparagine 226. Glutamate 69 contributes to the Mg(2+) binding site. Phosphoserine is present on serine 339. Positions 427-447 (EATADEDAEFEEEQEAEVDEN) are disordered. The segment covering 429-447 (TADEDAEFEEEQEAEVDEN) has biased composition (acidic residues).

It belongs to the tubulin family. Dimer of alpha and beta chains. A typical microtubule is a hollow water-filled tube with an outer diameter of 25 nm and an inner diameter of 15 nM. Alpha-beta heterodimers associate head-to-tail to form protofilaments running lengthwise along the microtubule wall with the beta-tubulin subunit facing the microtubule plus end conferring a structural polarity. Microtubules usually have 13 protofilaments but different protofilament numbers can be found in some organisms and specialized cells. Interacts with mgr and Vhl. It depends on Mg(2+) as a cofactor.

The protein localises to the cytoplasm. The protein resides in the cytoskeleton. Functionally, tubulin is the major constituent of microtubules, a cylinder consisting of laterally associated linear protofilaments composed of alpha- and beta-tubulin heterodimers. Microtubules grow by the addition of GTP-tubulin dimers to the microtubule end, where a stabilizing cap forms. Below the cap, tubulin dimers are in GDP-bound state, owing to GTPase activity of alpha-tubulin. The sequence is that of Tubulin beta-1 chain (betaTub56D) from Drosophila melanogaster (Fruit fly).